Reading from the N-terminus, the 387-residue chain is Capsid protein (387 aa).

A compositionally biased stretch (basic residues) spans 1-33; sequence MARTKSKPRKRTTVRKARRSVKRRTTTKGTKRK. Disordered stretches follow at residues 1 to 47 and 365 to 387; these read MART…RGVA and KSAKINDQLNNNQDAANKKREFN. 2 consecutive short sequence motifs (nuclear localization signal) follow at residues 8-15 and 30-37; these read PRKRTTVR and TKRKTAGD. A compositionally biased stretch (low complexity) spans 370 to 379; it reads NDQLNNNQDA.

It is found in the host nucleus. The protein resides in the virion. Functionally, self-assembles to form the virion icosahedral capsid. This Chaetoceros protobacilladnavirus 2 (Chaetoceros sp. DNA virus 7) protein is Capsid protein.